Here is a 437-residue protein sequence, read N- to C-terminus: Protein farnesyltransferase subunit beta (437 aa).

PFTB repeat units lie at residues 123–164 (ATDV…CIIG), 174–215 (REKL…SLTN), 222–263 (FEGT…VILK), 270–312 (LKSL…PLLH), and 332–374 (QQAL…SIAQ). (2E,6E)-farnesyl diphosphate contacts are provided by residues 248–251 (HGGY) and 291–294 (RCNK). Positions 297 and 299 each coordinate Zn(2+). 300–303 (YSFW) contributes to the (2E,6E)-farnesyl diphosphate binding site. His-362 is a Zn(2+) binding site. Phosphoserine is present on Ser-432. Thr-436 is modified (phosphothreonine).

This sequence belongs to the protein prenyltransferase subunit beta family. Heterodimer of FNTA and FNTB. Zn(2+) serves as cofactor.

It carries out the reaction L-cysteinyl-[protein] + (2E,6E)-farnesyl diphosphate = S-(2E,6E)-farnesyl-L-cysteinyl-[protein] + diphosphate. Functionally, essential subunit of the farnesyltransferase complex. Catalyzes the transfer of a farnesyl moiety from farnesyl diphosphate to a cysteine at the fourth position from the C-terminus of several proteins having the C-terminal sequence Cys-aliphatic-aliphatic-X. The chain is Protein farnesyltransferase subunit beta (Fntb) from Mus musculus (Mouse).